We begin with the raw amino-acid sequence, 278 residues long: Sulfur carrier protein FdhD (278 aa).

Cysteine 117 functions as the Cysteine persulfide intermediate in the catalytic mechanism.

The protein belongs to the FdhD family.

It localises to the cytoplasm. Required for formate dehydrogenase (FDH) activity. Acts as a sulfur carrier protein that transfers sulfur from IscS to the molybdenum cofactor prior to its insertion into FDH. This Variovorax paradoxus (strain S110) protein is Sulfur carrier protein FdhD.